A 160-amino-acid polypeptide reads, in one-letter code: Transcription elongation factor GreA (160 aa).

A coiled-coil region spans residues 12–76 (EGVKKLEEEL…QLENMLKNAS (65 aa)).

The protein belongs to the GreA/GreB family.

Necessary for efficient RNA polymerase transcription elongation past template-encoded arresting sites. The arresting sites in DNA have the property of trapping a certain fraction of elongating RNA polymerases that pass through, resulting in locked ternary complexes. Cleavage of the nascent transcript by cleavage factors such as GreA or GreB allows the resumption of elongation from the new 3'terminus. GreA releases sequences of 2 to 3 nucleotides. In Clostridium botulinum (strain Hall / ATCC 3502 / NCTC 13319 / Type A), this protein is Transcription elongation factor GreA.